A 155-amino-acid polypeptide reads, in one-letter code: Phospholipase A2 A2-actitoxin-Ucs2a (155 aa).

The N-terminal stretch at methionine 1–cysteine 19 is a signal peptide. Residues leucine 20 to glutamine 42 constitute a propeptide that is removed on maturation. Disulfide bonds link cysteine 55-cysteine 118, cysteine 71-cysteine 87, cysteine 86-cysteine 143, cysteine 93-cysteine 136, cysteine 100-cysteine 129, and cysteine 122-cysteine 134. Ca(2+)-binding residues include glycine 72 and glycine 74. The active site involves histidine 90. Position 91 (aspartate 91) interacts with Ca(2+). Aspartate 137 is a catalytic residue.

The protein belongs to the phospholipase A2 family. Ca(2+) serves as cofactor.

Its subcellular location is the secreted. The protein resides in the nematocyst. The catalysed reaction is a 1,2-diacyl-sn-glycero-3-phosphocholine + H2O = a 1-acyl-sn-glycero-3-phosphocholine + a fatty acid + H(+). PLA2 catalyzes the calcium-dependent hydrolysis of the 2-acyl groups in 3-sn-phosphoglycerides. The sequence is that of Phospholipase A2 A2-actitoxin-Ucs2a from Urticina crassicornis (Mottled anemone).